The primary structure comprises 164 residues: Large ribosomal subunit protein uL23 (164 aa).

Residues 1 to 41 (MPAKAASAAASKKNSAPKSAVSKKVAKKGAPAAAAKPTKVV) are disordered.

The protein belongs to the universal ribosomal protein uL23 family.

Its function is as follows. This protein binds to a specific region on the 26S rRNA. The polypeptide is Large ribosomal subunit protein uL23 (RPL23A) (Trypanosoma brucei brucei).